Here is a 130-residue protein sequence, read N- to C-terminus: Large ribosomal subunit protein eL22 (130 aa).

This sequence belongs to the eukaryotic ribosomal protein eL22 family.

This Caenorhabditis elegans protein is Large ribosomal subunit protein eL22 (rpl-22).